A 223-amino-acid polypeptide reads, in one-letter code: Putative 3-methyladenine DNA glycosylase (223 aa).

This sequence belongs to the DNA glycosylase MPG family.

The polypeptide is Putative 3-methyladenine DNA glycosylase (Rickettsia typhi (strain ATCC VR-144 / Wilmington)).